The primary structure comprises 728 residues: MSNEGKCPFNHGKRNGTTNRDWWPNQLNLKILHQHSSEADPMDPGFDYAEAFNSLDLAAVKADLRALMTASQDWWPADFGHYGPFFVRMAWHSAGTYRTGDGRGGAGRGQQRFAPLNSWPDNVGLDKARRLIWPVKQKYGRKISWADLIVLTGNVALESMGFKTFGFAGGREDSWEPDEDVYWGMESTWLDDKRYSGDRQLETPLAAVQMGLIYVNPEGPNGNPDPLASARDIRETFARMAMNDEETVALIAGGHTFGKTHGAGDASHVGPEPEAAPLEQMGLGWKSSFGSGKAGDAIGSGLEVIWTSTPTQWSNNFFWNLFGYDWELTKSPAGAHQWQPKGGAGADSVPDPFEPGKRRVPTMLTSDIALRADPTYEKISRRFFENPNEFAEAFARAWFKLTHRDMGPRVRYLGPEVPSEELLWQDPIPMPDHPQVDEQDVSALKAKVLASGLSVSELVSTAWASASTFRGSDKRGGANGARVRLAPQKDWEVNQPAQLATVLEVLGALQVEFNRAATGGKQVSLADLIVIAGNAGVEQAAAAAGVEITVPFTPGRGDASAEQTDVDSMAVLEPIADGFRNYLKGAYTIPAEKLLIDKAQLLSLSAPEMTVLIGGLRVLGTNVGDSKHGVFTDRREVLTNDFFRNLLDMGTEWKPTSEANEAYEGRDRATGELKWLASRVDLVFGSHSQLRALSEVYGSEDSQQKFVRDFVAAWTKVMNADRFDIKHN.

Residues 1-20 are disordered; that stretch reads MSNEGKCPFNHGKRNGTTNR. Residues 91–214 constitute a cross-link (tryptophyl-tyrosyl-methioninium (Trp-Tyr) (with M-240)); the sequence is WHSAGTYRTG…LAAVQMGLIY (124 aa). The active-site Proton acceptor is His-92. Positions 214 to 240 form a cross-link, tryptophyl-tyrosyl-methioninium (Tyr-Met) (with W-91); that stretch reads YVNPEGPNGNPDPLASARDIRETFARM. A heme b-binding site is contributed by His-255. The disordered stretch occupies residues 335-355; sequence AHQWQPKGGAGADSVPDPFEP.

It belongs to the peroxidase family. Peroxidase/catalase subfamily. As to quaternary structure, homodimer or homotetramer. Requires heme b as cofactor. In terms of processing, formation of the three residue Trp-Tyr-Met cross-link is important for the catalase, but not the peroxidase activity of the enzyme.

The catalysed reaction is H2O2 + AH2 = A + 2 H2O. The enzyme catalyses 2 H2O2 = O2 + 2 H2O. In terms of biological role, bifunctional enzyme with both catalase and broad-spectrum peroxidase activity. The chain is Catalase-peroxidase 2 from Burkholderia cenocepacia (strain HI2424).